Reading from the N-terminus, the 384-residue chain is Spermidine/putrescine import ATP-binding protein PotA (384 aa).

One can recognise an ABC transporter domain in the interval Ile-6 to Ile-238. Gly-40–Ser-47 provides a ligand contact to ATP.

This sequence belongs to the ABC transporter superfamily. Spermidine/putrescine importer (TC 3.A.1.11.1) family. The complex is composed of two ATP-binding proteins (PotA), two transmembrane proteins (PotB and PotC) and a solute-binding protein (PotD).

The protein resides in the cell membrane. The enzyme catalyses ATP + H2O + polyamine-[polyamine-binding protein]Side 1 = ADP + phosphate + polyamineSide 2 + [polyamine-binding protein]Side 1.. Part of the ABC transporter complex PotABCD involved in spermidine/putrescine import. Responsible for energy coupling to the transport system. This chain is Spermidine/putrescine import ATP-binding protein PotA, found in Streptococcus pyogenes serotype M12 (strain MGAS2096).